Here is a 235-residue protein sequence, read N- to C-terminus: Glucosamine-6-phosphate deaminase (235 aa).

Asp-62 acts as the Proton acceptor; for enolization step in catalysis. Catalysis depends on Asn-128, which acts as the For ring-opening step. The active-site Proton acceptor; for ring-opening step is His-130. Catalysis depends on Glu-135, which acts as the For ring-opening step.

This sequence belongs to the glucosamine/galactosamine-6-phosphate isomerase family. NagB subfamily.

The enzyme catalyses alpha-D-glucosamine 6-phosphate + H2O = beta-D-fructose 6-phosphate + NH4(+). It participates in amino-sugar metabolism; N-acetylneuraminate degradation; D-fructose 6-phosphate from N-acetylneuraminate: step 5/5. Functionally, catalyzes the reversible isomerization-deamination of glucosamine 6-phosphate (GlcN6P) to form fructose 6-phosphate (Fru6P) and ammonium ion. This chain is Glucosamine-6-phosphate deaminase, found in Lactococcus lactis subsp. lactis (strain IL1403) (Streptococcus lactis).